We begin with the raw amino-acid sequence, 462 residues long: Cytochrome P450 20A1 (462 aa).

Residues 4–24 traverse the membrane as a helical segment; the sequence is FAIFAVTFLLALVGAVLYLYP. A heme-binding site is contributed by Cys-409.

This sequence belongs to the cytochrome P450 family. Heme is required as a cofactor.

The protein resides in the membrane. In Homo sapiens (Human), this protein is Cytochrome P450 20A1 (CYP20A1).